Reading from the N-terminus, the 448-residue chain is Vacuolar amino acid transporter 6 (448 aa).

The Cytoplasmic portion of the chain corresponds to 1-7 (MVASIRS). Residues 8–28 (GVLTLLHTACGAGILAMPYAF) form a helical membrane-spanning segment. At 29 to 32 (KPFG) the chain is on the vacuolar side. Residues 33–53 (LIPGVIMIVLCGACAMQSLFI) form a helical membrane-spanning segment. The Cytoplasmic segment spans residues 54–80 (QARVAKYVPQGRASFSALTRLINPNLG). Residues 81 to 101 (IVFDLAIAIKCFGVGVSYMIV) traverse the membrane as a helical segment. Residues 102–125 (VGDLMPQIMSVWTRNAWLLNRNVQ) lie on the Vacuolar side of the membrane. Residues 126-146 (ISLIMLFFVAPLSFLKKLNSL) form a helical membrane-spanning segment. The Cytoplasmic segment spans residues 147–150 (RYAS). Residues 151 to 171 (MVAISSVAYLCVLVLLHYVAP) traverse the membrane as a helical segment. Residues 172–195 (SDEILRLKGRISYLLPPQSHDLNV) lie on the Vacuolar side of the membrane. Residues 196-216 (LNTLPIFVFAYTCHHNMFSII) traverse the membrane as a helical segment. Residues 217–229 (NEQRSSRFEHVMK) are Cytoplasmic-facing. The helical transmembrane segment at 230–250 (IPLIAISLALILYIAIGCAGY) threads the bilayer. The Vacuolar portion of the chain corresponds to 251-267 (LTFGDNIIGNIIMLYPQ). The chain crosses the membrane as a helical span at residues 268-288 (AVSSTIGRIAIVLLVMLAFPL). Residues 289–357 (QCHPARASIH…PKETPLRGKS (69 aa)) are Cytoplasmic-facing. The residue at position 344 (Ser344) is a Phosphoserine. Residues 358 to 378 (FIVITCSILVASYLVAISVSS) traverse the membrane as a helical segment. Topologically, residues 379–381 (LAR) are vacuolar. The helical transmembrane segment at 382–402 (VLAIVGATGSTSISFILPGLF) threads the bilayer. At 403–424 (GYKLIGTEHKTAVPLTTKIFKY) the chain is on the cytoplasmic side. A helical membrane pass occupies residues 425–445 (TGLLLFIWGLIIMITCLTAAL). Residues 446-448 (KLN) lie on the Vacuolar side of the membrane.

It belongs to the amino acid/polyamine transporter 2 family.

The protein resides in the vacuole membrane. Its function is as follows. Involved in amino acid efflux from the vacuole to the cytoplasm. Capable of transporting aspartate and glutamate. Requires ATP for function. The polypeptide is Vacuolar amino acid transporter 6 (AVT6) (Saccharomyces cerevisiae (strain ATCC 204508 / S288c) (Baker's yeast)).